The primary structure comprises 382 residues: Nuclear hormone receptor family member nhr-106 (382 aa).

A DNA-binding region (nuclear receptor) is located at residues 2–78; it reads QTTCEICEVP…MGMMPEKVKV (77 aa). 2 consecutive NR C4-type zinc fingers follow at residues 5–25 and 42–61; these read CEICEVPAHGIHFGAITCRGC and CKYSSNCTNFTGKFPQCKSC. The NR LBD domain maps to 110-380; that stretch reads DVSNLITRGL…FSNPEMFIDS (271 aa).

It belongs to the nuclear hormone receptor family.

It is found in the nucleus. In terms of biological role, orphan nuclear receptor. The chain is Nuclear hormone receptor family member nhr-106 (nhr-106) from Caenorhabditis elegans.